We begin with the raw amino-acid sequence, 348 residues long: Erlin-1 (348 aa).

The Cytoplasmic portion of the chain corresponds to 1–7 (MNMTQAR). A helical membrane pass occupies residues 8-28 (VLVAAVVGLVAVLLYASIHKI). Residues 29–348 (EEGHLAVYYR…NVIQNKESTG (320 aa)) lie on the Lumenal side of the membrane. N-linked (GlcNAc...) asparagine glycosylation is present at asparagine 108. Lysine 269 carries the N6-acetyllysine modification. The interval 325-348 (SSLPSKEALEPSGENVIQNKESTG) is disordered. Residues 339-348 (NVIQNKESTG) are compositionally biased toward polar residues.

It belongs to the band 7/mec-2 family. In terms of assembly, forms a heteromeric complex with ERLIN2. In complex with ERLIN2, interacts with RNF170. Interacts with AMFR and SYVN1. In terms of processing, deubiquitinated by USP25; leading to stabilization. As to expression, expressed in heart, placenta, liver, kidney, pancreas, prostate, testis, ovary and small intestine.

It is found in the endoplasmic reticulum membrane. Its function is as follows. Component of the ERLIN1/ERLIN2 complex which mediates the endoplasmic reticulum-associated degradation (ERAD) of inositol 1,4,5-trisphosphate receptors (IP3Rs). Involved in regulation of cellular cholesterol homeostasis by regulation the SREBP signaling pathway. Binds cholesterol and may promote ER retention of the SCAP-SREBF complex. Functionally, (Microbial infection) Required early in hepatitis C virus (HCV) infection to initiate RNA replication, and later in the infection to support infectious virus production. The polypeptide is Erlin-1 (Homo sapiens (Human)).